The primary structure comprises 533 residues: Flavin-containing monooxygenase 5 (533 aa).

The residue at position 5 (R5) is a Dimethylated arginine. Residues 10–14, E33, and 41–42 each bind FAD; these read GSGAS and LW. The residue at position 54 (S54) is a Phosphoserine. Y56 is subject to Phosphotyrosine. Phosphoserine is present on S58. Position 62–63 (62–63) interacts with FAD; sequence NT. 196–199 lines the NADP(+) pocket; sequence SGGD. T284 is subject to Phosphothreonine. At S401 the chain carries Phosphoserine. Residues 513–533 traverse the membrane as a helical segment; it reads LVTVRVLMLAVTFLAVILAYF.

Belongs to the FMO family. FAD serves as cofactor.

It is found in the microsome membrane. The protein resides in the endoplasmic reticulum membrane. The enzyme catalyses N,N-dimethylaniline + NADPH + O2 + H(+) = N,N-dimethylaniline N-oxide + NADP(+) + H2O. It catalyses the reaction NADPH + O2 + H(+) = H2O2 + NADP(+). The catalysed reaction is heptan-2-one + NADPH + O2 + H(+) = pentyl acetate + NADP(+) + H2O. It carries out the reaction octan-3-one + NADPH + O2 + H(+) = pentyl propanoate + NADP(+) + H2O. The enzyme catalyses octan-3-one + NADPH + O2 + H(+) = ethyl hexanoate + NADP(+) + H2O. It catalyses the reaction hexan-3-one + NADPH + O2 + H(+) = ethyl butanoate + NADP(+) + H2O. The catalysed reaction is hexan-3-one + NADPH + O2 + H(+) = propyl propanoate + NADP(+) + H2O. It carries out the reaction heptan-4-one + NADPH + O2 + H(+) = propyl butanoate + NADP(+) + H2O. The enzyme catalyses (2E)-geranial + NADPH + O2 + H(+) = (1E)-2,6-dimethylhepta-1,5-dien-1-yl formate + NADP(+) + H2O. It catalyses the reaction sulcatone + NADPH + O2 + H(+) = 4-methylpent-3-en-1-yl acetate + NADP(+) + H2O. Its function is as follows. Acts as a Baeyer-Villiger monooxygenase on a broad range of substrates. Catalyzes the insertion of an oxygen atom into a carbon-carbon bond adjacent to a carbonyl, which converts ketones to esters. Active on diverse carbonyl compounds, whereas soft nucleophiles are mostly non- or poorly reactive. In contrast with other forms of FMO it is non- or poorly active on 'classical' substrates such as drugs, pesticides, and dietary components containing soft nucleophilic heteroatoms. Able to oxidize drug molecules bearing a carbonyl group on an aliphatic chain, such as nabumetone and pentoxifylline. Also, in the absence of substrates, shows slow but yet significant NADPH oxidase activity. Acts as a positive modulator of cholesterol biosynthesis as well as glucose homeostasis, promoting metabolic aging via pleiotropic effects. The polypeptide is Flavin-containing monooxygenase 5 (Rattus norvegicus (Rat)).